The following is a 214-amino-acid chain: Ribosomal RNA small subunit methyltransferase G (214 aa).

Residues Gly-81, Met-86, 132–133 (VE), and Arg-147 each bind S-adenosyl-L-methionine.

This sequence belongs to the methyltransferase superfamily. RNA methyltransferase RsmG family.

It localises to the cytoplasm. The catalysed reaction is guanosine(527) in 16S rRNA + S-adenosyl-L-methionine = N(7)-methylguanosine(527) in 16S rRNA + S-adenosyl-L-homocysteine. Specifically methylates the N7 position of guanine in position 527 of 16S rRNA. This chain is Ribosomal RNA small subunit methyltransferase G, found in Ectopseudomonas mendocina (strain ymp) (Pseudomonas mendocina).